Reading from the N-terminus, the 131-residue chain is D-ribose pyranase (131 aa).

His20 acts as the Proton donor in catalysis. Residues Asp28, His98, and Tyr120–Asn122 each bind substrate.

The protein belongs to the RbsD / FucU family. RbsD subfamily. As to quaternary structure, homodecamer.

It localises to the cytoplasm. It carries out the reaction beta-D-ribopyranose = beta-D-ribofuranose. It functions in the pathway carbohydrate metabolism; D-ribose degradation; D-ribose 5-phosphate from beta-D-ribopyranose: step 1/2. In terms of biological role, catalyzes the interconversion of beta-pyran and beta-furan forms of D-ribose. The chain is D-ribose pyranase from Clostridium tetani (strain Massachusetts / E88).